The chain runs to 290 residues: Thymidylate synthase (290 aa).

Arginine 31 is a binding site for dUMP. Histidine 61 provides a ligand contact to (6R)-5,10-methylene-5,6,7,8-tetrahydrofolate. 152–153 (RR) serves as a coordination point for dUMP. The Nucleophile role is filled by cysteine 172. Residues 192-195 (RSAD), asparagine 203, and 233-235 (HIY) each bind dUMP. (6R)-5,10-methylene-5,6,7,8-tetrahydrofolate is bound at residue aspartate 195. A (6R)-5,10-methylene-5,6,7,8-tetrahydrofolate-binding site is contributed by alanine 289.

This sequence belongs to the thymidylate synthase family. Bacterial-type ThyA subfamily. As to quaternary structure, homodimer.

Its subcellular location is the cytoplasm. It catalyses the reaction dUMP + (6R)-5,10-methylene-5,6,7,8-tetrahydrofolate = 7,8-dihydrofolate + dTMP. It functions in the pathway pyrimidine metabolism; dTTP biosynthesis. Its function is as follows. Catalyzes the reductive methylation of 2'-deoxyuridine-5'-monophosphate (dUMP) to 2'-deoxythymidine-5'-monophosphate (dTMP) while utilizing 5,10-methylenetetrahydrofolate (mTHF) as the methyl donor and reductant in the reaction, yielding dihydrofolate (DHF) as a by-product. This enzymatic reaction provides an intracellular de novo source of dTMP, an essential precursor for DNA biosynthesis. The sequence is that of Thymidylate synthase from Psychrobacter cryohalolentis (strain ATCC BAA-1226 / DSM 17306 / VKM B-2378 / K5).